Consider the following 390-residue polypeptide: Exodeoxyribonuclease 7 large subunit (390 aa).

The protein belongs to the XseA family. As to quaternary structure, heterooligomer composed of large and small subunits.

The protein localises to the cytoplasm. The enzyme catalyses Exonucleolytic cleavage in either 5'- to 3'- or 3'- to 5'-direction to yield nucleoside 5'-phosphates.. Bidirectionally degrades single-stranded DNA into large acid-insoluble oligonucleotides, which are then degraded further into small acid-soluble oligonucleotides. The chain is Exodeoxyribonuclease 7 large subunit from Synechococcus sp. (strain CC9311).